A 331-amino-acid chain; its full sequence is Glycerol-3-phosphate dehydrogenase [NAD(P)+] (331 aa).

Positions 11 and 101 each coordinate NADPH. Positions 101, 132, and 134 each coordinate sn-glycerol 3-phosphate. Position 136 (Ala-136) interacts with NADPH. Positions 188, 241, 251, 252, and 253 each coordinate sn-glycerol 3-phosphate. Lys-188 acts as the Proton acceptor in catalysis. Arg-252 contributes to the NADPH binding site. Glu-278 contributes to the NADPH binding site.

Belongs to the NAD-dependent glycerol-3-phosphate dehydrogenase family.

It is found in the cytoplasm. The catalysed reaction is sn-glycerol 3-phosphate + NAD(+) = dihydroxyacetone phosphate + NADH + H(+). It catalyses the reaction sn-glycerol 3-phosphate + NADP(+) = dihydroxyacetone phosphate + NADPH + H(+). It participates in membrane lipid metabolism; glycerophospholipid metabolism. Catalyzes the reduction of the glycolytic intermediate dihydroxyacetone phosphate (DHAP) to sn-glycerol 3-phosphate (G3P), the key precursor for phospholipid synthesis. The protein is Glycerol-3-phosphate dehydrogenase [NAD(P)+] of Phytoplasma mali (strain AT).